A 182-amino-acid chain; its full sequence is Endoribonuclease YbeY (182 aa).

Zn(2+)-binding residues include His115, His119, and His125.

Belongs to the endoribonuclease YbeY family. The cofactor is Zn(2+).

The protein resides in the cytoplasm. Its function is as follows. Single strand-specific metallo-endoribonuclease involved in late-stage 70S ribosome quality control and in maturation of the 3' terminus of the 16S rRNA. This chain is Endoribonuclease YbeY, found in Bifidobacterium longum (strain NCC 2705).